Here is a 236-residue protein sequence, read N- to C-terminus: Orotidine 5'-phosphate decarboxylase (236 aa).

Substrate contacts are provided by residues aspartate 16, lysine 38, 65–74 (DLKLHDIGNT), threonine 123, arginine 184, glutamine 193, glycine 213, and arginine 214. The active-site Proton donor is lysine 67.

Belongs to the OMP decarboxylase family. Type 1 subfamily. As to quaternary structure, homodimer.

The enzyme catalyses orotidine 5'-phosphate + H(+) = UMP + CO2. Its pathway is pyrimidine metabolism; UMP biosynthesis via de novo pathway; UMP from orotate: step 2/2. Catalyzes the decarboxylation of orotidine 5'-monophosphate (OMP) to uridine 5'-monophosphate (UMP). This Methylobacterium sp. (strain 4-46) protein is Orotidine 5'-phosphate decarboxylase.